A 406-amino-acid chain; its full sequence is Succinyl-diaminopimelate desuccinylase (406 aa).

His95 lines the Zn(2+) pocket. Asp97 is an active-site residue. Asp128 is a binding site for Zn(2+). Glu162 acts as the Proton acceptor in catalysis. Glu163, Glu191, and His377 together coordinate Zn(2+).

This sequence belongs to the peptidase M20A family. DapE subfamily. In terms of assembly, homodimer. The cofactor is Zn(2+). Requires Co(2+) as cofactor.

The enzyme catalyses N-succinyl-(2S,6S)-2,6-diaminopimelate + H2O = (2S,6S)-2,6-diaminopimelate + succinate. It participates in amino-acid biosynthesis; L-lysine biosynthesis via DAP pathway; LL-2,6-diaminopimelate from (S)-tetrahydrodipicolinate (succinylase route): step 3/3. In terms of biological role, catalyzes the hydrolysis of N-succinyl-L,L-diaminopimelic acid (SDAP), forming succinate and LL-2,6-diaminopimelate (DAP), an intermediate involved in the bacterial biosynthesis of lysine and meso-diaminopimelic acid, an essential component of bacterial cell walls. In Polaromonas naphthalenivorans (strain CJ2), this protein is Succinyl-diaminopimelate desuccinylase.